The chain runs to 509 residues: Maturase K (509 aa).

This sequence belongs to the intron maturase 2 family. MatK subfamily.

It is found in the plastid. The protein resides in the chloroplast. Its function is as follows. Usually encoded in the trnK tRNA gene intron. Probably assists in splicing its own and other chloroplast group II introns. The sequence is that of Maturase K from Drimys granadensis.